The following is a 158-amino-acid chain: 2-C-methyl-D-erythritol 2,4-cyclodiphosphate synthase (158 aa).

2 residues coordinate a divalent metal cation: Asp8 and His10. 4-CDP-2-C-methyl-D-erythritol 2-phosphate is bound by residues 8–10 (DVH) and 34–35 (HS). His42 serves as a coordination point for a divalent metal cation. Residues 56–58 (DIG), 61–65 (FPDDD), 132–135 (TTFE), and Phe139 each bind 4-CDP-2-C-methyl-D-erythritol 2-phosphate.

It belongs to the IspF family. Homotrimer. A divalent metal cation serves as cofactor.

It catalyses the reaction 4-CDP-2-C-methyl-D-erythritol 2-phosphate = 2-C-methyl-D-erythritol 2,4-cyclic diphosphate + CMP. The protein operates within isoprenoid biosynthesis; isopentenyl diphosphate biosynthesis via DXP pathway; isopentenyl diphosphate from 1-deoxy-D-xylulose 5-phosphate: step 4/6. Functionally, involved in the biosynthesis of isopentenyl diphosphate (IPP) and dimethylallyl diphosphate (DMAPP), two major building blocks of isoprenoid compounds. Catalyzes the conversion of 4-diphosphocytidyl-2-C-methyl-D-erythritol 2-phosphate (CDP-ME2P) to 2-C-methyl-D-erythritol 2,4-cyclodiphosphate (ME-CPP) with a corresponding release of cytidine 5-monophosphate (CMP). The chain is 2-C-methyl-D-erythritol 2,4-cyclodiphosphate synthase from Natranaerobius thermophilus (strain ATCC BAA-1301 / DSM 18059 / JW/NM-WN-LF).